The following is a 544-amino-acid chain: MTKFIFVTGGVVSSLGKGIAAASIAAILESRGLNVTMLKLDPYINVDPGTMSPFQHGEVFVTDDGAETDLDLGHYERFIDSTMTRRNSFSTGQVYENVIAKERRGDYLGGTVQVIPHITDEIKRRIHEGAAGYDVAIVEIGGTVGDIESLPFLEAIRQMRSQLGRNNTLFAHLSYVPYIAAAGEIKTKPTQHTVKEMLSIGLQPDILICRMDRTMPADERRKIALFCNVEERAIVGSYDVDSIYECPEMLHDQGIDNIITEQLQLNVQQADLTAWKKIVHAIQNPKHTVKIAMVGKYVDLTESYKSLIEALKHAGVHTETDVQITFVDSESIEKNNGDVSMLKDMDAILVPGGFGSRGVEGKIAAVRYARENNVPYLGICLGMQIALIEYARDVAGLKGANSTEFDLKCAAPVVALIDEWQTADGSVETRDESADLGGTMRLGAQEVELKAGSLAAKIYGSEHIRERHRHRYEVNNNYVPTLEQAGLVIGGVSAGRERLVETIELPNHPWFFACQFHPEFTSNPRKGHPLFTAFVKAALNNKKA.

The tract at residues 1–265 is amidoligase domain; it reads MTKFIFVTGG…DNIITEQLQL (265 aa). Ser13 is a CTP binding site. Position 13 (Ser13) interacts with UTP. Residues 14–19 and Asp71 each bind ATP; that span reads SLGKGI. Mg(2+) is bound by residues Asp71 and Glu139. Residues 146–148, 186–191, and Lys222 contribute to the CTP site; these read DIE and KTKPTQ. Residues 186–191 and Lys222 contribute to the UTP site; that span reads KTKPTQ. A Glutamine amidotransferase type-1 domain is found at 290 to 544; it reads KIAMVGKYVD…VKAALNNKKA (255 aa). L-glutamine is bound at residue Gly353. The active-site Nucleophile; for glutamine hydrolysis is Cys380. Residues 381 to 384, Glu404, and Arg471 contribute to the L-glutamine site; that span reads LGMQ. Active-site residues include His517 and Glu519.

This sequence belongs to the CTP synthase family. As to quaternary structure, homotetramer.

The enzyme catalyses UTP + L-glutamine + ATP + H2O = CTP + L-glutamate + ADP + phosphate + 2 H(+). It catalyses the reaction L-glutamine + H2O = L-glutamate + NH4(+). The catalysed reaction is UTP + NH4(+) + ATP = CTP + ADP + phosphate + 2 H(+). It functions in the pathway pyrimidine metabolism; CTP biosynthesis via de novo pathway; CTP from UDP: step 2/2. With respect to regulation, allosterically activated by GTP, when glutamine is the substrate; GTP has no effect on the reaction when ammonia is the substrate. The allosteric effector GTP functions by stabilizing the protein conformation that binds the tetrahedral intermediate(s) formed during glutamine hydrolysis. Inhibited by the product CTP, via allosteric rather than competitive inhibition. Functionally, catalyzes the ATP-dependent amination of UTP to CTP with either L-glutamine or ammonia as the source of nitrogen. Regulates intracellular CTP levels through interactions with the four ribonucleotide triphosphates. This chain is CTP synthase, found in Neisseria meningitidis serogroup A / serotype 4A (strain DSM 15465 / Z2491).